A 75-amino-acid chain; its full sequence is Translational regulator CsrA (75 aa).

The protein belongs to the CsrA/RsmA family. As to quaternary structure, homodimer; the beta-strands of each monomer intercalate to form a hydrophobic core, while the alpha-helices form wings that extend away from the core.

The protein localises to the cytoplasm. Functionally, a translational regulator that binds mRNA to regulate translation initiation and/or mRNA stability. Usually binds in the 5'-UTR at or near the Shine-Dalgarno sequence preventing ribosome-binding, thus repressing translation. Its main target seems to be the major flagellin gene, while its function is anatagonized by FliW. The chain is Translational regulator CsrA from Exiguobacterium sibiricum (strain DSM 17290 / CCUG 55495 / CIP 109462 / JCM 13490 / 255-15).